A 737-amino-acid chain; its full sequence is Alpha-adducin (737 aa).

Methionine 1 carries the post-translational modification N-acetylmethionine. A disordered region spans residues 1–21 (MNGDSRAAVVTSPPPTTAPHK). Serine 12 is modified (phosphoserine). Serine 59 is modified (phosphoserine; by PKA). Position 64 is a phosphoserine (serine 64). The residue at position 331 (threonine 331) is a Phosphothreonine. Phosphoserine occurs at positions 334, 353, 355, 358, and 366. Serine 408 carries the post-translational modification Phosphoserine; by PKA. Over residues 419-430 (YSFTSDGDSGTC) the composition is skewed to polar residues. Disordered stretches follow at residues 419–490 (YSFT…NLFV) and 576–737 (RREV…KSES). Phosphoserine is present on serine 427. Threonine 429 bears the Phosphothreonine mark. Serine 431 carries the post-translational modification Phosphoserine. Position 436 is a phosphoserine; by PKA (serine 436). Phosphothreonine; by ROCK2 is present on threonine 445. Phosphoserine is present on residues serine 464 and serine 465. Position 480 is a phosphothreonine; by ROCK2 (threonine 480). Residue serine 481 is modified to Phosphoserine; by PKA. Residues 576–601 (RREVERKQKGSEENLDEAREQKEKSP) show a composition bias toward basic and acidic residues. Serine 586, serine 600, and serine 613 each carry phosphoserine. The segment covering 602 to 614 (PDQPAVPYPPPST) has biased composition (pro residues). Threonine 614 is subject to Phosphothreonine. Serine 678, serine 707, serine 710, and serine 714 each carry phosphoserine. Positions 687–714 (PVAEEAAPSAAEEGAAADPGSDGSPGKS) are enriched in low complexity. Residues 715-737 (PSKKKKKFRTPSFLKKSKKKSES) show a composition bias toward basic residues. Position 716 is a phosphoserine; by PKC (serine 716). The interaction with calmodulin stretch occupies residues 717–734 (KKKKKFRTPSFLKKSKKK). Phosphoserine; by PKA and PKC is present on serine 726.

This sequence belongs to the aldolase class II family. Adducin subfamily. As to quaternary structure, heterodimer of an alpha and a beta subunit or an alpha and a gamma subunit.

Its subcellular location is the cytoplasm. It is found in the cytoskeleton. The protein resides in the cell membrane. In terms of biological role, membrane-cytoskeleton-associated protein that promotes the assembly of the spectrin-actin network. Binds to calmodulin. In Pongo abelii (Sumatran orangutan), this protein is Alpha-adducin (ADD1).